Here is a 227-residue protein sequence, read N- to C-terminus: MNVSAVIVAAGRSTRMNKSLNKVYLSIAGKPVLYYSIKAFDEIEWIKEIIVVTSPEETEYCQENVLEKFYWNKPFKIVKGGEERQYSVYNGISVVDKDCEIVAIHDGARPLVTKEIIMEAIKAAYLYKAAAVGVPVKDTIKVADEDNFILDTPDRRYLWAIQTPQVFEKELIVKAHRKALEEGFLGTDDSVLVERMGFKVKLVEGDYKNIKITTPEDLVVAELFLRK.

It belongs to the IspD/TarI cytidylyltransferase family. IspD subfamily.

It carries out the reaction 2-C-methyl-D-erythritol 4-phosphate + CTP + H(+) = 4-CDP-2-C-methyl-D-erythritol + diphosphate. Its pathway is isoprenoid biosynthesis; isopentenyl diphosphate biosynthesis via DXP pathway; isopentenyl diphosphate from 1-deoxy-D-xylulose 5-phosphate: step 2/6. Functionally, catalyzes the formation of 4-diphosphocytidyl-2-C-methyl-D-erythritol from CTP and 2-C-methyl-D-erythritol 4-phosphate (MEP). The polypeptide is 2-C-methyl-D-erythritol 4-phosphate cytidylyltransferase (Caldanaerobacter subterraneus subsp. tengcongensis (strain DSM 15242 / JCM 11007 / NBRC 100824 / MB4) (Thermoanaerobacter tengcongensis)).